A 326-amino-acid polypeptide reads, in one-letter code: MAPPSAVEANSPIDGVHLKSAFEVKAVHAQTASQGKTLAELAEKWDQGFTFAPIRESQVSRAMTRRYFKDLDTYAESDVVIVGAGSCGLSTAYMLGKARPDLKIAIIEASVSPGGGAWLGGQLFSAMVMRKPADAFLIDLGVPFEDEGDFVVVKHAALFTSTLLSKVLAFPNIKLFNATSVEDLITRQTADGNIRIAGVVTNWTLVTMHHDDQSCMDPNTINAPIVISTTGHDGPFGAFCVKRLVSMNQIKELGGMRGLDMNVAEDAIVKKTREIVPGLIVGGMELSEVDGANRMGPTFGAMALSGVKAAEEALKVFDERKAQNAY.

Residues Cys87, 108–109 (EA), Gly116, and Val181 contribute to the substrate site. 2,3-didehydroalanine (Cys) is present on Cys215. Residues Asp217, His232, Met284, and 294–296 (RMG) contribute to the substrate site.

It belongs to the THI4 family. In terms of assembly, homooctamer. Requires Fe cation as cofactor. Post-translationally, during the catalytic reaction, a sulfide is transferred from Cys-215 to a reaction intermediate, generating a dehydroalanine residue.

Its subcellular location is the cytoplasm. It localises to the nucleus. It catalyses the reaction [ADP-thiazole synthase]-L-cysteine + glycine + NAD(+) = [ADP-thiazole synthase]-dehydroalanine + ADP-5-ethyl-4-methylthiazole-2-carboxylate + nicotinamide + 3 H2O + 2 H(+). Functionally, involved in biosynthesis of the thiamine precursor thiazole. Catalyzes the conversion of NAD and glycine to adenosine diphosphate 5-(2-hydroxyethyl)-4-methylthiazole-2-carboxylic acid (ADT), an adenylated thiazole intermediate. The reaction includes an iron-dependent sulfide transfer from a conserved cysteine residue of the protein to a thiazole intermediate. The enzyme can only undergo a single turnover, which suggests it is a suicide enzyme. May have additional roles in adaptation to various stress conditions and in DNA damage tolerance. The chain is Thiamine thiazole synthase from Sclerotinia sclerotiorum (strain ATCC 18683 / 1980 / Ss-1) (White mold).